The primary structure comprises 358 residues: Histidinol-phosphate aminotransferase (358 aa).

Lysine 217 carries the N6-(pyridoxal phosphate)lysine modification.

It belongs to the class-II pyridoxal-phosphate-dependent aminotransferase family. Histidinol-phosphate aminotransferase subfamily. In terms of assembly, homodimer. Pyridoxal 5'-phosphate is required as a cofactor.

The enzyme catalyses L-histidinol phosphate + 2-oxoglutarate = 3-(imidazol-4-yl)-2-oxopropyl phosphate + L-glutamate. The protein operates within amino-acid biosynthesis; L-histidine biosynthesis; L-histidine from 5-phospho-alpha-D-ribose 1-diphosphate: step 7/9. The polypeptide is Histidinol-phosphate aminotransferase (Ruminiclostridium cellulolyticum (strain ATCC 35319 / DSM 5812 / JCM 6584 / H10) (Clostridium cellulolyticum)).